The following is a 275-amino-acid chain: Protein COFACTOR ASSEMBLY OF COMPLEX C SUBUNIT B CCB2, chloroplastic (275 aa).

The N-terminal 19 residues, Met-1–Arg-19, are a transit peptide targeting the chloroplast. The Stromal portion of the chain corresponds to Ala-20–Arg-65. The helical transmembrane segment at Trp-66 to Ile-86 threads the bilayer. The Lumenal portion of the chain corresponds to Ser-87–Ser-93. Residues Glu-94–Leu-114 form a helical membrane-spanning segment. The Stromal portion of the chain corresponds to Lys-115–Gly-275.

It is found in the plastid. The protein resides in the chloroplast thylakoid membrane. In terms of biological role, required for the biogenesis and accumulation of native cytochrome b6 in the thylakoid membrane. Controls the conversion of apocytochrome b6 to holocytochrome b6. Required for covalent binding of the c-type heme to cytochrome b6. This is Protein COFACTOR ASSEMBLY OF COMPLEX C SUBUNIT B CCB2, chloroplastic from Arabidopsis thaliana (Mouse-ear cress).